The chain runs to 616 residues: Chaperone protein HscA (616 aa).

It belongs to the heat shock protein 70 family.

Chaperone involved in the maturation of iron-sulfur cluster-containing proteins. Has a low intrinsic ATPase activity which is markedly stimulated by HscB. Involved in the maturation of IscU. The protein is Chaperone protein HscA of Cronobacter sakazakii (strain ATCC BAA-894) (Enterobacter sakazakii).